Here is a 461-residue protein sequence, read N- to C-terminus: Alpha-tubulin N-acetyltransferase 1 (461 aa).

The region spanning 2–189 (VEFRFDIKPL…NNFVLYEGFF (188 aa)) is the N-acetyltransferase domain. Acetyl-CoA contacts are provided by residues 123–136 (FYVHESRQRAGLGK) and 159–168 (SEKLLSFLSK). Disordered stretches follow at residues 196–295 (NGGG…GNHD), 314–362 (NSYE…PEVA), and 418–443 (RPPGHEVTSPGQDNTDAMSTVSSGGG). Polar residues predominate over residues 233–254 (RRGSQQQTTPNARLQQITQISP). Low complexity predominate over residues 283 to 293 (GSAEANSGNGN). Over residues 318–336 (PEPEVEPEPEPEPEPEPEP) the composition is skewed to acidic residues. Pro residues predominate over residues 339-356 (ITPPSPPPKSHTPTPPSV). A compositionally biased stretch (polar residues) spans 426-439 (SPGQDNTDAMSTVS).

It belongs to the acetyltransferase ATAT1 family.

It carries out the reaction L-lysyl-[alpha-tubulin] + acetyl-CoA = N(6)-acetyl-L-lysyl-[alpha-tubulin] + CoA + H(+). Specifically acetylates 'Lys-40' in alpha-tubulin on the lumenal side of microtubules. Promotes microtubule destabilization and accelerates microtubule dynamics; this activity may be independent of acetylation activity. Acetylates alpha-tubulin with a slow enzymatic rate, due to a catalytic site that is not optimized for acetyl transfer. Enters the microtubule through each end and diffuses quickly throughout the lumen of microtubules. Acetylates only long/old microtubules because of its slow acetylation rate since it does not have time to act on dynamically unstable microtubules before the enzyme is released. Acetylates central spindle microtubules. In Drosophila melanogaster (Fruit fly), this protein is Alpha-tubulin N-acetyltransferase 1.